The following is a 319-amino-acid chain: Serine/threonine-protein phosphatase PP1 isozyme 2 (319 aa).

The Mn(2+) site is built by Asp-61, His-63, Asp-89, and Asn-121. The active-site Proton donor is the His-122. Residues His-170 and His-245 each coordinate Mn(2+).

Belongs to the PPP phosphatase family. PP-1 subfamily. The cofactor is Mn(2+).

The catalysed reaction is O-phospho-L-seryl-[protein] + H2O = L-seryl-[protein] + phosphate. It carries out the reaction O-phospho-L-threonyl-[protein] + H2O = L-threonyl-[protein] + phosphate. The protein is Serine/threonine-protein phosphatase PP1 isozyme 2 of Acetabularia peniculus (Green alga).